A 156-amino-acid chain; its full sequence is Transcriptional repressor NrdR (156 aa).

A zinc finger spans residues 3–34 (CPFCSETDTKVIDSRLVADGAQVRRRRECLTC). The region spanning 49-139 (PRVIKQDGTR…VYRSFQDLSE (91 aa)) is the ATP-cone domain.

This sequence belongs to the NrdR family. Zn(2+) serves as cofactor.

Its function is as follows. Negatively regulates transcription of bacterial ribonucleotide reductase nrd genes and operons by binding to NrdR-boxes. The sequence is that of Transcriptional repressor NrdR from Saccharophagus degradans (strain 2-40 / ATCC 43961 / DSM 17024).